A 496-amino-acid chain; its full sequence is Thiamine transporter 2 (496 aa).

Residues 1-7 (MDCYRTS) are Cytoplasmic-facing. The helical transmembrane segment at 8-28 (PSNSWIYTTVILCIFGFFSMM) threads the bilayer. Over 29 to 53 (RPSEPFLIPYLSGPDKNLTSEEMTN) the chain is Extracellular. Residue Asn-45 is glycosylated (N-linked (GlcNAc...) asparagine). Residues 54-74 (EIFPVWTYSYLVLLLPVLVLT) traverse the membrane as a helical segment. Residues 75–81 (DYVRYKP) are Cytoplasmic-facing. Residues 82–102 (VIILQGISFIITWLLLLFGQG) form a helical membrane-spanning segment. Over 103-110 (VKTMQVVE) the chain is Extracellular. Residues 111-131 (FFYGMVTATEVAYYAYIYSVV) traverse the membrane as a helical segment. Residues 132 to 144 (SPEHYQRVSGYCR) lie on the Cytoplasmic side of the membrane. Residues 145–165 (SVTLVAYTAGSVLAQLLVSLA) traverse the membrane as a helical segment. Residue Asn-166 is glycosylated (N-linked (GlcNAc...) asparagine). At 166–169 (NLSY) the chain is on the extracellular side. The chain crosses the membrane as a helical span at residues 170 to 190 (FYLNVISLASVSVAFLFSLFL). The Cytoplasmic portion of the chain corresponds to 191-282 (PMPKKSMFFH…YSSKRLFYWS (92 aa)). The interval 210-248 (SSSVNPVLEETHEGEAPDCEKQKPTSEIPSTSGKLHKGQ) is disordered. Positions 218 to 233 (EETHEGEAPDCEKQKP) are enriched in basic and acidic residues. Polar residues predominate over residues 234 to 248 (TSEIPSTSGKLHKGQ). Residues 283 to 303 (LWWAFATAGFNQILNYVQILW) form a helical membrane-spanning segment. Topologically, residues 304–316 (DYKSPSQDSSIYN) are extracellular. Residues 317–337 (GAVEATATFGGAVAAFAVGYV) form a helical membrane-spanning segment. At 338–342 (KVNWD) the chain is on the cytoplasmic side. Residues 343-363 (LLGELALAVFSVVNAGSLFLM) traverse the membrane as a helical segment. Topologically, residues 364–375 (HYTANIWACYAG) are extracellular. Residues 376-396 (YLIFKSSYMLLITIAVFQIAV) traverse the membrane as a helical segment. Residues 397 to 405 (NLSVERYAL) lie on the Cytoplasmic side of the membrane. Residues 406-426 (VFGINTFIALVIQTIITVIVV) form a helical membrane-spanning segment. Residues 427 to 434 (DQRGLNLP) lie on the Extracellular side of the membrane. The chain crosses the membrane as a helical span at residues 435–455 (ISIQFLVYGSYFAVIAGIFLM). Residues 456-496 (RSMYIIYSTKSQKDVQSPAPSENPDMSHPEEESNAIMSTKL) lie on the Cytoplasmic side of the membrane. Positions 469-496 (DVQSPAPSENPDMSHPEEESNAIMSTKL) are disordered.

This sequence belongs to the reduced folate carrier (RFC) transporter (TC 2.A.48) family.

The protein resides in the membrane. The catalysed reaction is thiamine(out) + H(+)(in) = thiamine(in) + H(+)(out). It carries out the reaction pyridoxine(out) + n H(+)(out) = pyridoxine(in) + n H(+)(in). Its function is as follows. Mediates high affinity thiamine uptake, probably via a proton anti-port mechanism. Has no folate transport activity. Mediates H(+)-dependent pyridoxine transport. This is Thiamine transporter 2 (SLC19A3) from Macaca fascicularis (Crab-eating macaque).